A 390-amino-acid polypeptide reads, in one-letter code: Succinyl-diaminopimelate desuccinylase (390 aa).

H74 serves as a coordination point for Zn(2+). D76 is a catalytic residue. D107 is a Zn(2+) binding site. E140 acts as the Proton acceptor in catalysis. Residues E141, E169, and H363 each contribute to the Zn(2+) site.

It belongs to the peptidase M20A family. DapE subfamily. In terms of assembly, homodimer. Zn(2+) serves as cofactor. It depends on Co(2+) as a cofactor.

It carries out the reaction N-succinyl-(2S,6S)-2,6-diaminopimelate + H2O = (2S,6S)-2,6-diaminopimelate + succinate. It participates in amino-acid biosynthesis; L-lysine biosynthesis via DAP pathway; LL-2,6-diaminopimelate from (S)-tetrahydrodipicolinate (succinylase route): step 3/3. Functionally, catalyzes the hydrolysis of N-succinyl-L,L-diaminopimelic acid (SDAP), forming succinate and LL-2,6-diaminopimelate (DAP), an intermediate involved in the bacterial biosynthesis of lysine and meso-diaminopimelic acid, an essential component of bacterial cell walls. The sequence is that of Succinyl-diaminopimelate desuccinylase from Bartonella quintana (strain Toulouse) (Rochalimaea quintana).